Here is a 109-residue protein sequence, read N- to C-terminus: Thiosulfate sulfurtransferase GlpE (109 aa).

Residues 16 to 104 enclose the Rhodanese domain; sequence RAEGAVVVDI…WRSTYPGETA (89 aa). Cys-64 (cysteine persulfide intermediate) is an active-site residue.

This sequence belongs to the GlpE family.

Its subcellular location is the cytoplasm. It catalyses the reaction thiosulfate + hydrogen cyanide = thiocyanate + sulfite + 2 H(+). It carries out the reaction thiosulfate + [thioredoxin]-dithiol = [thioredoxin]-disulfide + hydrogen sulfide + sulfite + 2 H(+). In terms of biological role, transferase that catalyzes the transfer of sulfur from thiosulfate to thiophilic acceptors such as cyanide or dithiols. May function in a CysM-independent thiosulfate assimilation pathway by catalyzing the conversion of thiosulfate to sulfite, which can then be used for L-cysteine biosynthesis. The sequence is that of Thiosulfate sulfurtransferase GlpE from Pseudomonas entomophila (strain L48).